The chain runs to 208 residues: Predicted GPI-anchored protein 37 (208 aa).

An N-terminal signal peptide occupies residues 1–18 (MLFTQLIILLTVTSQALS). The segment at 33–93 (TKRLGGGSRG…SSSSSGSRNW (61 aa)) is disordered. Residues 36-53 (LGGGSRGGSSSGSRGGSS) are compositionally biased toward gly residues. Residues 54–63 (SGSSSGSSSG) show a composition bias toward low complexity. The N-linked (GlcNAc...) asparagine glycan is linked to Asn173. Ser185 carries GPI-anchor amidated serine lipidation. Residues 186 to 208 (SSLNIPSTHFYLIGFAAAYSIVL) constitute a propeptide, removed in mature form.

This sequence belongs to the PGA37 family.

It is found in the cell membrane. Predicted GPI-anchored protein which may have a role during host infection. This is Predicted GPI-anchored protein 37 (PGA37) from Candida albicans (strain SC5314 / ATCC MYA-2876) (Yeast).